The sequence spans 238 residues: LexA repressor (238 aa).

The H-T-H motif DNA-binding region spans 26 to 46; the sequence is FDEMKDALDLRSKSGIHRLIT. Residues serine 159 and lysine 197 each act as for autocatalytic cleavage activity in the active site.

It belongs to the peptidase S24 family. In terms of assembly, homodimer.

It carries out the reaction Hydrolysis of Ala-|-Gly bond in repressor LexA.. Its function is as follows. Represses a number of genes involved in the response to DNA damage (SOS response), including recA and lexA. In the presence of single-stranded DNA, RecA interacts with LexA causing an autocatalytic cleavage which disrupts the DNA-binding part of LexA, leading to derepression of the SOS regulon and eventually DNA repair. This is LexA repressor from Rhodobacter capsulatus (Rhodopseudomonas capsulata).